Reading from the N-terminus, the 82-residue chain is Putative defensin-like protein 70 (82 aa).

A signal peptide spans 1–27; the sequence is MKMESSKMLVVFTLMVLIAVSSDLVSG. 4 disulfides stabilise this stretch: C39–C80, C43–C66, C52–C78, and C56–C79.

Belongs to the DEFL family.

Its subcellular location is the secreted. This is Putative defensin-like protein 70 (LCR83) from Arabidopsis thaliana (Mouse-ear cress).